Consider the following 691-residue polypeptide: Guanylate cyclase soluble subunit alpha-1 (691 aa).

The segment at 26–65 (PREPLGEATGSGPASTPGQPGVCPGVPDKNPPGRLPRRKT) is disordered. The Guanylate cyclase domain maps to 482–609 (TMLFSDIVGF…NNVTLANKFE (128 aa)).

Belongs to the adenylyl cyclase class-4/guanylyl cyclase family. As to quaternary structure, heterodimer of an alpha and a beta chain.

It localises to the cytoplasm. It catalyses the reaction GTP = 3',5'-cyclic GMP + diphosphate. Activated by nitric oxide in the presence of magnesium or manganese ions. This is Guanylate cyclase soluble subunit alpha-1 (GUCY1A1) from Bos taurus (Bovine).